A 391-amino-acid chain; its full sequence is UDP-N-acetylglucosamine--N-acetylmuramyl-(pentapeptide) pyrophosphoryl-undecaprenol N-acetylglucosamine transferase (391 aa).

Residues 11–13 (TGG), Arg176, Ser206, and Gln312 each bind UDP-N-acetyl-alpha-D-glucosamine.

It belongs to the glycosyltransferase 28 family. MurG subfamily.

It localises to the cell inner membrane. It carries out the reaction di-trans,octa-cis-undecaprenyl diphospho-N-acetyl-alpha-D-muramoyl-L-alanyl-D-glutamyl-meso-2,6-diaminopimeloyl-D-alanyl-D-alanine + UDP-N-acetyl-alpha-D-glucosamine = di-trans,octa-cis-undecaprenyl diphospho-[N-acetyl-alpha-D-glucosaminyl-(1-&gt;4)]-N-acetyl-alpha-D-muramoyl-L-alanyl-D-glutamyl-meso-2,6-diaminopimeloyl-D-alanyl-D-alanine + UDP + H(+). It participates in cell wall biogenesis; peptidoglycan biosynthesis. In terms of biological role, cell wall formation. Catalyzes the transfer of a GlcNAc subunit on undecaprenyl-pyrophosphoryl-MurNAc-pentapeptide (lipid intermediate I) to form undecaprenyl-pyrophosphoryl-MurNAc-(pentapeptide)GlcNAc (lipid intermediate II). This Treponema denticola (strain ATCC 35405 / DSM 14222 / CIP 103919 / JCM 8153 / KCTC 15104) protein is UDP-N-acetylglucosamine--N-acetylmuramyl-(pentapeptide) pyrophosphoryl-undecaprenol N-acetylglucosamine transferase.